Here is a 196-residue protein sequence, read N- to C-terminus: Imidazoleglycerol-phosphate dehydratase (196 aa).

The protein belongs to the imidazoleglycerol-phosphate dehydratase family.

It is found in the cytoplasm. It carries out the reaction D-erythro-1-(imidazol-4-yl)glycerol 3-phosphate = 3-(imidazol-4-yl)-2-oxopropyl phosphate + H2O. It functions in the pathway amino-acid biosynthesis; L-histidine biosynthesis; L-histidine from 5-phospho-alpha-D-ribose 1-diphosphate: step 6/9. In Moorella thermoacetica (strain ATCC 39073 / JCM 9320), this protein is Imidazoleglycerol-phosphate dehydratase.